A 492-amino-acid chain; its full sequence is Steroid 21-hydroxylase (492 aa).

Heme b is bound by residues arginine 91 and lysine 120. Arginine 231 lines the 17alpha-hydroxyprogesterone pocket. Arginine 231 contributes to the progesterone binding site. Heme b-binding residues include histidine 363, arginine 424, and cysteine 426.

Belongs to the cytochrome P450 family. Heme b serves as cofactor.

The protein localises to the endoplasmic reticulum membrane. Its subcellular location is the microsome membrane. The enzyme catalyses 17alpha-hydroxyprogesterone + reduced [NADPH--hemoprotein reductase] + O2 = 11-deoxycortisol + oxidized [NADPH--hemoprotein reductase] + H2O + H(+). It carries out the reaction progesterone + reduced [NADPH--hemoprotein reductase] + O2 = 21-hydroxyprogesterone + oxidized [NADPH--hemoprotein reductase] + H2O + H(+). In terms of biological role, specifically catalyzes the 21-hydroxylation of steroids. Required for the adrenal synthesis of mineralocorticoids and glucocorticoids. This is Steroid 21-hydroxylase (CYP21) from Felis catus (Cat).